The primary structure comprises 151 residues: Ribosome maturation factor RimP (151 aa).

The protein belongs to the RimP family.

Its subcellular location is the cytoplasm. Required for maturation of 30S ribosomal subunits. The chain is Ribosome maturation factor RimP from Shewanella putrefaciens (strain CN-32 / ATCC BAA-453).